A 61-amino-acid chain; its full sequence is DNA-directed RNA polymerase subunit 12-like protein (61 aa).

Zn(2+) is bound by residues Cys21, Cys24, Cys38, and Cys41.

The protein belongs to the archaeal Rpo12/eukaryotic RPC10 RNA polymerase subunit family.

It is found in the nucleus. The polypeptide is DNA-directed RNA polymerase subunit 12-like protein (NRPB12L) (Arabidopsis thaliana (Mouse-ear cress)).